We begin with the raw amino-acid sequence, 291 residues long: Phosphoribosylaminoimidazole-succinocarboxamide synthase (291 aa).

This sequence belongs to the SAICAR synthetase family.

The catalysed reaction is 5-amino-1-(5-phospho-D-ribosyl)imidazole-4-carboxylate + L-aspartate + ATP = (2S)-2-[5-amino-1-(5-phospho-beta-D-ribosyl)imidazole-4-carboxamido]succinate + ADP + phosphate + 2 H(+). Its pathway is purine metabolism; IMP biosynthesis via de novo pathway; 5-amino-1-(5-phospho-D-ribosyl)imidazole-4-carboxamide from 5-amino-1-(5-phospho-D-ribosyl)imidazole-4-carboxylate: step 1/2. In Candida maltosa (Yeast), this protein is Phosphoribosylaminoimidazole-succinocarboxamide synthase (ADE1).